The primary structure comprises 864 residues: MLKEKYGFKEVEDKCNILWEGSKVYRWNGEKDNTFTIDTPPPTISGKLHIGHIFSYCHTDFIARFQRMLGKDVFYPIGFDDNGLPTERLVEQTYKTRAKEVGREKLIEMCHEVIEKSKQEFKELFKSVGISYDWDLEYHTISKETVTLSQMSFIDLYNKGYAYRKMQPILWDPVDKTAIAQAEIEDKVFESSLNTIVFSTEENEQINIATTRPELLPACVAVFCHPEDARYTHLIGKTTVVPITETKVPIIADDKVKIDKGTGLVMCCTFGDELDIYWQQKHNLPMKIIIDQDGRMSLHSVHGQKEEIWIPVSGHWDDTIGATGMTGERATQMTKEGGCDQKEEWIPVSATRMTDDILNEINGLKVTAARKRIIEILTEKGLLVESTNISHSVKCAERSGAPLEILPTYQWFIKTLEQKAQILDKVKECNWHPSNMRKRMEVWIEGLNWDWCISRQRYFGVPFPAWYSKRKGEEGKIILAEIKALPIDPSKDLPKGYSKEEIIPDQDVMDTWATSSITPQLSALAVNSEFSLPNHRYDTIFPADLRSQSHEIIRTWAFYTILKAHYHANSLPWKNIMISGWCLADDKKKMSKSKGNIITPHIILETYGADVVRYWAANSRLGVDTVYSENTFKIGKRLVTKLWNASKFVSMFMEKHQVMSINSAHETMDKWILSKLYKVIERATNNLLQFEYCEALGAIEEFFWKDFCDSYLELVKKRAYGSSEATLSAKQSLAYVLNVILRLFAPFLPYITEEIYHQLYSYNSVHNQSNWPSKEELIYDKYSEEMGDNVIQILNIIRKIKADNNVSVKHLIKKLMIKADLRKDKLDQSAQNDLQAVCNAETIEWMQSELETEDEKYIVNIDLY.

Residues 42–52 (PTISGKLHIGH) carry the 'HIGH' region motif. A 'KMSKS' region motif is present at residues 589–593 (KMSKS). Residue Lys592 coordinates ATP.

Belongs to the class-I aminoacyl-tRNA synthetase family. ValS type 2 subfamily. In terms of assembly, monomer.

The protein resides in the cytoplasm. The catalysed reaction is tRNA(Val) + L-valine + ATP = L-valyl-tRNA(Val) + AMP + diphosphate. Functionally, catalyzes the attachment of valine to tRNA(Val). As ValRS can inadvertently accommodate and process structurally similar amino acids such as threonine, to avoid such errors, it has a 'posttransfer' editing activity that hydrolyzes mischarged Thr-tRNA(Val) in a tRNA-dependent manner. The protein is Valine--tRNA ligase of Wolbachia pipientis wMel.